Consider the following 282-residue polypeptide: Formamidopyrimidine-DNA glycosylase (282 aa).

Proline 2 acts as the Schiff-base intermediate with DNA in catalysis. Glutamate 3 (proton donor) is an active-site residue. The Proton donor; for beta-elimination activity role is filled by lysine 60. Residues histidine 99, arginine 118, and lysine 163 each coordinate DNA. The FPG-type zinc-finger motif lies at 248–282 (WVYRRSGKNCKKCGEKILREKICGRSTHWCPNCQK). Arginine 272 serves as the catalytic Proton donor; for delta-elimination activity.

This sequence belongs to the FPG family. In terms of assembly, monomer. It depends on Zn(2+) as a cofactor.

It carries out the reaction Hydrolysis of DNA containing ring-opened 7-methylguanine residues, releasing 2,6-diamino-4-hydroxy-5-(N-methyl)formamidopyrimidine.. The enzyme catalyses 2'-deoxyribonucleotide-(2'-deoxyribose 5'-phosphate)-2'-deoxyribonucleotide-DNA = a 3'-end 2'-deoxyribonucleotide-(2,3-dehydro-2,3-deoxyribose 5'-phosphate)-DNA + a 5'-end 5'-phospho-2'-deoxyribonucleoside-DNA + H(+). Functionally, involved in base excision repair of DNA damaged by oxidation or by mutagenic agents. Acts as a DNA glycosylase that recognizes and removes damaged bases. Has a preference for oxidized purines, such as 7,8-dihydro-8-oxoguanine (8-oxoG). Has AP (apurinic/apyrimidinic) lyase activity and introduces nicks in the DNA strand. Cleaves the DNA backbone by beta-delta elimination to generate a single-strand break at the site of the removed base with both 3'- and 5'-phosphates. In Prochlorococcus marinus (strain NATL2A), this protein is Formamidopyrimidine-DNA glycosylase.